Here is a 350-residue protein sequence, read N- to C-terminus: tRNA uridine(34) hydroxylase (350 aa).

The 95-residue stretch at 146-240 (DDPDALFIDM…YARKAREQGL (95 aa)) folds into the Rhodanese domain. Catalysis depends on C200, which acts as the Cysteine persulfide intermediate.

It belongs to the TrhO family.

The catalysed reaction is uridine(34) in tRNA + AH2 + O2 = 5-hydroxyuridine(34) in tRNA + A + H2O. Its function is as follows. Catalyzes oxygen-dependent 5-hydroxyuridine (ho5U) modification at position 34 in tRNAs, the first step in 5-carboxymethoxyuridine (cmo5U) biosynthesis. May be part of an alternate pathway, which is able to bypass cmo5U biogenesis in a subset of tRNAs under aerobic conditions. In Escherichia coli (strain K12), this protein is tRNA uridine(34) hydroxylase.